The primary structure comprises 137 residues: Small ribosomal subunit protein uS12 (137 aa).

A 3-methylthioaspartic acid modification is found at Asp-89. The segment at 104–137 (TAGVNGRKQSRSKYGAKRPKPGQAAAAPAKGKKK) is disordered. Over residues 111–123 (KQSRSKYGAKRPK) the composition is skewed to basic residues. Residues 124-137 (PGQAAAAPAKGKKK) are compositionally biased toward low complexity.

Belongs to the universal ribosomal protein uS12 family. Part of the 30S ribosomal subunit. Contacts proteins S8 and S17. May interact with IF1 in the 30S initiation complex.

In terms of biological role, with S4 and S5 plays an important role in translational accuracy. Functionally, interacts with and stabilizes bases of the 16S rRNA that are involved in tRNA selection in the A site and with the mRNA backbone. Located at the interface of the 30S and 50S subunits, it traverses the body of the 30S subunit contacting proteins on the other side and probably holding the rRNA structure together. The combined cluster of proteins S8, S12 and S17 appears to hold together the shoulder and platform of the 30S subunit. The protein is Small ribosomal subunit protein uS12 of Cytophaga hutchinsonii (strain ATCC 33406 / DSM 1761 / CIP 103989 / NBRC 15051 / NCIMB 9469 / D465).